A 379-amino-acid chain; its full sequence is UDP-4-amino-4-deoxy-L-arabinose--oxoglutarate aminotransferase (379 aa).

An N6-(pyridoxal phosphate)lysine modification is found at lysine 182.

The protein belongs to the DegT/DnrJ/EryC1 family. ArnB subfamily. In terms of assembly, homodimer. The cofactor is pyridoxal 5'-phosphate.

The catalysed reaction is UDP-4-amino-4-deoxy-beta-L-arabinose + 2-oxoglutarate = UDP-beta-L-threo-pentopyranos-4-ulose + L-glutamate. The protein operates within nucleotide-sugar biosynthesis; UDP-4-deoxy-4-formamido-beta-L-arabinose biosynthesis; UDP-4-deoxy-4-formamido-beta-L-arabinose from UDP-alpha-D-glucuronate: step 2/3. It participates in bacterial outer membrane biogenesis; lipopolysaccharide biosynthesis. In terms of biological role, catalyzes the conversion of UDP-4-keto-arabinose (UDP-Ara4O) to UDP-4-amino-4-deoxy-L-arabinose (UDP-L-Ara4N). The modified arabinose is attached to lipid A and is required for resistance to polymyxin and cationic antimicrobial peptides. This is UDP-4-amino-4-deoxy-L-arabinose--oxoglutarate aminotransferase from Escherichia coli (strain ATCC 8739 / DSM 1576 / NBRC 3972 / NCIMB 8545 / WDCM 00012 / Crooks).